The sequence spans 222 residues: Zinc finger C2HC domain-containing protein 1B (222 aa).

Residues Glu14–Arg43 form a C2HC/C3H-type 1 zinc finger. Residues Cys18, Cys21, His33, and Cys37 each coordinate Zn(2+). The disordered stretch occupies residues Phe48–Asn78. The C2HC/C3H-type 2; degenerate zinc finger occupies Asp117–Arg146. The interval Pro196 to Asp222 is disordered.

This sequence belongs to the ZC2HC1 family. The cofactor is Zn(2+).

The polypeptide is Zinc finger C2HC domain-containing protein 1B (ZC2HC1B) (Homo sapiens (Human)).